An 845-amino-acid polypeptide reads, in one-letter code: Protein translocase subunit SecA (845 aa).

ATP contacts are provided by residues Gln-85, 103-107 (GEGKT), and Asp-492. A disordered region spans residues 787–845 (REQVAQGQAEHPETEQDAAAQSNTSAKRQPVRVDKKVGRNDLCPCGSGKKFKNCHGRNA). Cys-829, Cys-831, Cys-840, and His-841 together coordinate Zn(2+). Positions 835 to 845 (KKFKNCHGRNA) are enriched in basic residues.

Belongs to the SecA family. In terms of assembly, monomer and homodimer. Part of the essential Sec protein translocation apparatus which comprises SecA, SecYEG and auxiliary proteins SecDF. Other proteins may also be involved. The cofactor is Zn(2+).

The protein localises to the cell membrane. It localises to the cytoplasm. The enzyme catalyses ATP + H2O + cellular proteinSide 1 = ADP + phosphate + cellular proteinSide 2.. In terms of biological role, part of the Sec protein translocase complex. Interacts with the SecYEG preprotein conducting channel. Has a central role in coupling the hydrolysis of ATP to the transfer of proteins into and across the cell membrane, serving as an ATP-driven molecular motor driving the stepwise translocation of polypeptide chains across the membrane. In Enterococcus faecalis (strain ATCC 700802 / V583), this protein is Protein translocase subunit SecA.